A 209-amino-acid polypeptide reads, in one-letter code: uncharacterized protein (209 aa).

Transmembrane regions (helical) follow at residues 10-32 (AVVIILTRFMEAIAIIISIYLAF), 37-59 (LRYVLATAGVFLLSVLINLTGLI), and 64-86 (FIYFSLASIFLSALILTALILYV).

It localises to the cell membrane. This is an uncharacterized protein from Aquifex aeolicus (strain VF5).